A 207-amino-acid polypeptide reads, in one-letter code: Ribonuclease HII (207 aa).

The region spanning 12–201 is the RNase H type-2 domain; sequence DLVAGVDEVG…VRAAWEAREG (190 aa). The a divalent metal cation site is built by Asp18, Glu19, and Asp110.

Belongs to the RNase HII family. It depends on Mn(2+) as a cofactor. Requires Mg(2+) as cofactor.

Its subcellular location is the cytoplasm. It carries out the reaction Endonucleolytic cleavage to 5'-phosphomonoester.. In terms of biological role, endonuclease that specifically degrades the RNA of RNA-DNA hybrids. The polypeptide is Ribonuclease HII (Pseudomonas putida (strain W619)).